Here is a 948-residue protein sequence, read N- to C-terminus: ELKS/Rab6-interacting/CAST family member 1 (948 aa).

Residues 1 to 54 are disordered; it reads MYGSARSVGKVEPSSQSPGRSPRLPRSPRLGHRRTNSTGGSSGNSVGGGSGKTL. An N6-acetyllysine modification is found at lysine 10. The span at 13 to 28 shows a compositional bias: low complexity; it reads PSSQSPGRSPRLPRSP. Phosphoserine is present on residues serine 17, serine 21, and serine 37. A Phosphothreonine modification is found at threonine 38. Residues 40-51 are compositionally biased toward gly residues; sequence GSSGNSVGGGSG. 5 positions are modified to phosphoserine: serine 55, serine 75, serine 94, serine 796, and serine 937. Residues 144-920 adopt a coiled-coil conformation; it reads RQARDNTIMD…RMKLMADNYE (777 aa). The segment covering 773 to 796 has biased composition (basic and acidic residues); that stretch reads KHKEQVEKKKSAQMLEEARRREDS. 2 disordered regions span residues 773–801 and 903–948; these read KHKE…SDSS and QLKQ…GIWA. Positions 939-948 are enriched in acidic residues; the sequence is DQDEEEGIWA.

As to quaternary structure, interacts with the GTB-bound forms of RAB6A isoform 1 and isoform 2 and with RAB6B. The interaction was strongest with RAB6B, followed by RAB6A isoform 2 and weakest with RAB6A isoform 1. Part of a complex with CHUK, IKBKB and IKBKG. Interacts with CHUK, IKBKB and IKBKG. The interaction with IKBKG is independent of CHUK and IKBKB. Interacts with NFKBIA. Isoform 1 interacts through its C-terminus with the PDZ domains of RIMS1 and RIMS2. Interacts with ERC2/CAST1. Interacts with SDCCAG8. Part of a cortical microtubule stabilization complex (CMSC) composed of KANK1, PPFIA1, PPFIBP1, ERC1/ELKS, PHLDB2/LL5beta, CLASPs, KIF21A and possibly additional interactors; within CMSCs KANK1 and PHLDB2/LL5beta appear to be the core components for targeting of microtubule-binding proteins KIF21A and CLASPs, whereas PPFIA1, PPFIBP1 and ERC1/ELKS serve as scaffolds for protein clustering. As to expression, isoform 1 is specifically expressed in brain. A further probable isoform is widely expressed outside of brain It is referred to as ERC1a by PubMed:12391317 and characterized by a C-terminus identical to that of isoforms 1 in human and mouse.

Its subcellular location is the cytoplasm. It localises to the cytoskeleton. The protein resides in the microtubule organizing center. The protein localises to the centrosome. It is found in the membrane. Its subcellular location is the golgi apparatus membrane. It localises to the presynaptic active zone. The protein resides in the cell projection. The protein localises to the podosome. Its function is as follows. Regulatory subunit of the IKK complex. Probably recruits IkappaBalpha/NFKBIA to the complex. May be involved in the organization of the cytomatrix at the nerve terminals active zone (CAZ) which regulates neurotransmitter release. May be involved in vesicle trafficking at the CAZ. May be involved in Rab-6 regulated endosomes to Golgi transport. In Rattus norvegicus (Rat), this protein is ELKS/Rab6-interacting/CAST family member 1 (Erc1).